The primary structure comprises 138 residues: Altered inheritance of mitochondria protein 11 (138 aa).

2 helical membrane passes run 17–34 and 67–89; these read ARFY…RLIS and LTYA…CWAL.

It belongs to the AIM11 family.

The protein localises to the membrane. The polypeptide is Altered inheritance of mitochondria protein 11 (AIM11) (Saccharomyces cerevisiae (strain JAY291) (Baker's yeast)).